The sequence spans 448 residues: Homogentisate 1,2-dioxygenase (448 aa).

Residue histidine 303 is the Proton acceptor of the active site. Fe cation contacts are provided by histidine 346 and glutamate 352. Homogentisate contacts are provided by tyrosine 361 and histidine 382. Histidine 382 lines the Fe cation pocket.

It belongs to the homogentisate dioxygenase family. In terms of assembly, hexamer; dimer of trimers. It depends on Fe cation as a cofactor.

The catalysed reaction is homogentisate + O2 = 4-maleylacetoacetate + H(+). Its pathway is amino-acid degradation; L-phenylalanine degradation; acetoacetate and fumarate from L-phenylalanine: step 4/6. Involved in the catabolism of homogentisate (2,5-dihydroxyphenylacetate or 2,5-OH-PhAc), a central intermediate in the degradation of phenylalanine and tyrosine. Catalyzes the oxidative ring cleavage of the aromatic ring of homogentisate to yield maleylacetoacetate. In Bradyrhizobium diazoefficiens (strain JCM 10833 / BCRC 13528 / IAM 13628 / NBRC 14792 / USDA 110), this protein is Homogentisate 1,2-dioxygenase.